The chain runs to 399 residues: All trans-polyprenyl-diphosphate synthase PDSS2 (399 aa).

This sequence belongs to the FPP/GGPP synthase family. Heterotetramer composed of 2 PDSS1/DPS1 and 2 PDSS2/DLP1 subunits.

It localises to the mitochondrion. The catalysed reaction is 7 isopentenyl diphosphate + (2E,6E)-farnesyl diphosphate = all-trans-decaprenyl diphosphate + 7 diphosphate. It carries out the reaction 6 isopentenyl diphosphate + (2E,6E)-farnesyl diphosphate = all-trans-nonaprenyl diphosphate + 6 diphosphate. It participates in cofactor biosynthesis; ubiquinone biosynthesis. In terms of biological role, heterotetrameric enzyme that catalyzes the condensation of farnesyl diphosphate (FPP), which acts as a primer, and isopentenyl diphosphate (IPP) to produce prenyl diphosphates of varying chain lengths and participates in the determination of the side chain of ubiquinone. Supplies nona and decaprenyl diphosphate, the precursors for the side chain of the isoprenoid quinones ubiquinone-9 (Q9) and ubiquinone-10 (Q10) respectively. The enzyme adds isopentenyl diphosphate molecules sequentially to farnesyl diphosphate with trans stereochemistry. May play a role during cerebellar development. May regulate mitochondrial respiratory chain function. This chain is All trans-polyprenyl-diphosphate synthase PDSS2, found in Homo sapiens (Human).